The following is a 331-amino-acid chain: tRNA uridine(34) hydroxylase (331 aa).

The Rhodanese domain occupies 123–217; that stretch reads TDPEVLLIDT…YLEDVPQEES (95 aa). Cysteine 177 acts as the Cysteine persulfide intermediate in catalysis. A disordered region spans residues 293–331; it reads KSRGEEHIGSEAAKAIKKRQAEKKLKRKNYHQHLTQGAE. A compositionally biased stretch (basic residues) spans 307–323; sequence AIKKRQAEKKLKRKNYH.

It belongs to the TrhO family.

It catalyses the reaction uridine(34) in tRNA + AH2 + O2 = 5-hydroxyuridine(34) in tRNA + A + H2O. Catalyzes oxygen-dependent 5-hydroxyuridine (ho5U) modification at position 34 in tRNAs. This is tRNA uridine(34) hydroxylase from Hahella chejuensis (strain KCTC 2396).